Here is a 284-residue protein sequence, read N- to C-terminus: ADP-polyphosphate phosphotransferase 3 (284 aa).

Basic and acidic residues-rich tracts occupy residues 1–22 (MDKHTDDRKKNNHWKAEDRKSA) and 260–277 (DLGKRQKRPADFEGDTRR). Disordered regions lie at residues 1–32 (MDKHTDDRKKNNHWKAEDRKSAATEASETRSG) and 260–284 (DLGKRQKRPADFEGDTRRRTVPNLF).

It belongs to the polyphosphate kinase 2 (PPK2) family. Class I subfamily.

It carries out the reaction [phosphate](n) + ATP = [phosphate](n+1) + ADP. The enzyme catalyses [phosphate](n) + GTP = [phosphate](n+1) + GDP. Uses inorganic polyphosphate (polyP) as a donor to convert ADP to ATP. Can also convert GDP to GTP, with lower efficiency. The sequence is that of ADP-polyphosphate phosphotransferase 3 from Rhizobium meliloti (strain 1021) (Ensifer meliloti).